A 442-amino-acid chain; its full sequence is Interferon-related developmental regulator 2 (442 aa).

Residues 1-15 (MPRARKGNTLRKGGQ) show a composition bias toward basic residues. Residues 1–71 (MPRARKGNTL…DVVDEQGQQE (71 aa)) form a disordered region. Over residues 43 to 56 (TASECPSLLSTTAE) the composition is skewed to polar residues.

Belongs to the IFRD family. As to quaternary structure, associates with ribosomes; promoting ribosome inactivation. In terms of tissue distribution, expressed in many tissues including heart, brain, placenta, lung, liver, skeletal muscle, kidney and pancreas.

Functionally, ribosome-binding protein that acts as an inhibitor of mRNA translation by promoting ribosome inactivation. Associates with the P- and E-sites of the ribosome and inserts a C-terminal helix into the mRNA exit channel to preclude translation. This chain is Interferon-related developmental regulator 2, found in Homo sapiens (Human).